A 497-amino-acid polypeptide reads, in one-letter code: Squalene monooxygenase (497 aa).

FAD contacts are provided by residues 29-30 (VV), 49-50 (ER), Arg57, Arg159, Val175, Asp336, and Met349. 2 helical membrane-spanning segments follow: residues 434-454 (FLSG…TVAL) and 467-487 (LGFL…AKVF).

It belongs to the squalene monooxygenase family. FAD serves as cofactor.

It is found in the microsome membrane. The protein localises to the endoplasmic reticulum membrane. It catalyses the reaction squalene + reduced [NADPH--hemoprotein reductase] + O2 = (S)-2,3-epoxysqualene + oxidized [NADPH--hemoprotein reductase] + H2O + H(+). The protein operates within terpene metabolism; lanosterol biosynthesis; lanosterol from farnesyl diphosphate: step 2/3. Functionally, catalyzes the stereospecific oxidation of squalene to (S)-2,3-epoxysqualene, and is considered to be a rate-limiting enzyme in steroid biosynthesis. The sequence is that of Squalene monooxygenase (ERG1) from Eremothecium gossypii (strain ATCC 10895 / CBS 109.51 / FGSC 9923 / NRRL Y-1056) (Yeast).